The following is a 154-amino-acid chain: Low molecular weight protein-tyrosine-phosphatase PtpA (154 aa).

The active-site Nucleophile is the C8. R14 is an active-site residue. Catalysis depends on D120, which acts as the Proton donor.

This sequence belongs to the low molecular weight phosphotyrosine protein phosphatase family.

It catalyses the reaction O-phospho-L-tyrosyl-[protein] + H2O = L-tyrosyl-[protein] + phosphate. In terms of biological role, dephosphorylates the phosphotyrosine-containing proteins. The sequence is that of Low molecular weight protein-tyrosine-phosphatase PtpA (ptpA) from Staphylococcus haemolyticus (strain JCSC1435).